Reading from the N-terminus, the 193-residue chain is Large ribosomal subunit protein uL5 (193 aa).

Belongs to the universal ribosomal protein uL5 family. As to quaternary structure, part of the 50S ribosomal subunit; part of the 5S rRNA/L5/L18/L25 subcomplex. Contacts the 5S rRNA and the P site tRNA. Forms a bridge to the 30S subunit in the 70S ribosome.

In terms of biological role, this is one of the proteins that bind and probably mediate the attachment of the 5S RNA into the large ribosomal subunit, where it forms part of the central protuberance. In the 70S ribosome it contacts protein S13 of the 30S subunit (bridge B1b), connecting the 2 subunits; this bridge is implicated in subunit movement. Contacts the P site tRNA; the 5S rRNA and some of its associated proteins might help stabilize positioning of ribosome-bound tRNAs. This chain is Large ribosomal subunit protein uL5, found in Novosphingobium aromaticivorans (strain ATCC 700278 / DSM 12444 / CCUG 56034 / CIP 105152 / NBRC 16084 / F199).